Consider the following 371-residue polypeptide: Transcription termination/antitermination protein NusA (371 aa).

The S1 motif domain maps to 135 to 199 (EDIMTGIVQR…KGPQIYVSRT (65 aa)). The KH domain maps to 301–367 (EKATTVIVPD…EPLFTEPETA (67 aa)). Residues 347–371 (GIYPRELEEDDEPLFTEPETAESDE) are disordered. Residues 353-371 (LEEDDEPLFTEPETAESDE) show a composition bias toward acidic residues.

The protein belongs to the NusA family. In terms of assembly, monomer. Binds directly to the core enzyme of the DNA-dependent RNA polymerase and to nascent RNA.

The protein localises to the cytoplasm. Its function is as follows. Participates in both transcription termination and antitermination. The polypeptide is Transcription termination/antitermination protein NusA (Bacillus subtilis (strain 168)).